Here is a 236-residue protein sequence, read N- to C-terminus: 2,3,4,5-tetrahydropyridine-2,6-dicarboxylate N-acetyltransferase (236 aa).

The protein belongs to the transferase hexapeptide repeat family. DapH subfamily.

The enzyme catalyses (S)-2,3,4,5-tetrahydrodipicolinate + acetyl-CoA + H2O = L-2-acetamido-6-oxoheptanedioate + CoA. It functions in the pathway amino-acid biosynthesis; L-lysine biosynthesis via DAP pathway; LL-2,6-diaminopimelate from (S)-tetrahydrodipicolinate (acetylase route): step 1/3. Its function is as follows. Catalyzes the transfer of an acetyl group from acetyl-CoA to tetrahydrodipicolinate. This is 2,3,4,5-tetrahydropyridine-2,6-dicarboxylate N-acetyltransferase from Bacillus licheniformis (strain ATCC 14580 / DSM 13 / JCM 2505 / CCUG 7422 / NBRC 12200 / NCIMB 9375 / NCTC 10341 / NRRL NRS-1264 / Gibson 46).